The following is a 271-amino-acid chain: Octanoyltransferase LipM (271 aa).

In terms of domain architecture, BPL/LPL catalytic spans 31–242 (GHNKPTLRFY…GLAEQFNVEF (212 aa)). Catalysis depends on Cys144, which acts as the Acyl-thioester intermediate.

This sequence belongs to the octanoyltransferase LipM family. In terms of assembly, monomer.

The enzyme catalyses octanoyl-[ACP] + L-lysyl-[protein] = N(6)-octanoyl-L-lysyl-[protein] + holo-[ACP] + H(+). It participates in protein modification; protein lipoylation via endogenous pathway; protein N(6)-(lipoyl)lysine from octanoyl-[acyl-carrier-protein]. Functionally, catalyzes the transfer of endogenously produced octanoic acid from octanoyl-acyl-carrier-protein onto the lipoyl domain of GcvH, an intermediate carrier during protein lipoylation. This Clostridioides difficile (strain 630) (Peptoclostridium difficile) protein is Octanoyltransferase LipM.